A 414-amino-acid chain; its full sequence is Ornithine aminotransferase (414 aa).

A disulfide bridge connects residues C154 and C163. K262 is subject to N6-(pyridoxal phosphate)lysine.

It belongs to the class-III pyridoxal-phosphate-dependent aminotransferase family. In terms of assembly, homodimer. The cofactor is pyridoxal 5'-phosphate. Post-translationally, the disulfide bond between Cys-154 and Cys-163 is reduced by TRX1 which increases OAT catalytic activity.

The protein localises to the cytoplasm. The catalysed reaction is a 2-oxocarboxylate + L-ornithine = L-glutamate 5-semialdehyde + an L-alpha-amino acid. It catalyses the reaction L-ornithine + 2-oxoglutarate = L-glutamate 5-semialdehyde + L-glutamate. It functions in the pathway amino-acid biosynthesis; L-proline biosynthesis; L-glutamate 5-semialdehyde from L-ornithine: step 1/1. With respect to regulation, unlike for mammalian OATs, activity is increased by TRX1-mediated reduction of the disulfide bond between Cys-154 and Cys-163. Binding to TRX1 may also induce conformational changes that facilitate substrate binding. Functionally, the enzyme has a very narrow substrate specificity and can only catalyze the transamination of alpha-ketoglutarate with ornithine or N-acetylornithine and, to a lesser extent, of glutamate-5-semialdehyde with glutamate and alanine. The protein is Ornithine aminotransferase of Plasmodium falciparum (isolate 3D7).